We begin with the raw amino-acid sequence, 280 residues long: Probable endonuclease 4 (280 aa).

Residues histidine 69, histidine 109, glutamate 145, aspartate 179, histidine 182, histidine 216, aspartate 229, histidine 231, and glutamate 261 each contribute to the Zn(2+) site.

The protein belongs to the AP endonuclease 2 family. Zn(2+) serves as cofactor.

The catalysed reaction is Endonucleolytic cleavage to 5'-phosphooligonucleotide end-products.. In terms of biological role, endonuclease IV plays a role in DNA repair. It cleaves phosphodiester bonds at apurinic or apyrimidinic (AP) sites, generating a 3'-hydroxyl group and a 5'-terminal sugar phosphate. The chain is Probable endonuclease 4 from Photorhabdus laumondii subsp. laumondii (strain DSM 15139 / CIP 105565 / TT01) (Photorhabdus luminescens subsp. laumondii).